Reading from the N-terminus, the 343-residue chain is Anthranilate 1,2-dioxygenase electron transfer component (343 aa).

The 94-residue stretch at histidine 3–serine 96 folds into the 2Fe-2S ferredoxin-type domain. [2Fe-2S] cluster-binding residues include cysteine 40, cysteine 45, cysteine 48, and cysteine 80. Residues isoleucine 98–serine 338 form a ferredoxin-reductase region. One can recognise an FAD-binding FR-type domain in the interval glutamate 103–arginine 206.

Belongs to the bacterial ring-hydroxylating dioxygenase ferredoxin reductase family. As to quaternary structure, monomer. It is part of the anthranilate dioxygenase two component enzyme system. The other component is an oxygenase component consisting of 3 large (AntA) and 3 small (AntB) subunits. FAD serves as cofactor. [2Fe-2S] cluster is required as a cofactor.

It carries out the reaction 2 reduced [2Fe-2S]-[ferredoxin] + NAD(+) + H(+) = 2 oxidized [2Fe-2S]-[ferredoxin] + NADH. The protein operates within aromatic compound metabolism; anthranilate degradation via hydroxylation; catechol from anthranilate: step 1/1. Its function is as follows. Electron transfer component of anthranilate 1,2-dioxygenase system. The protein is Anthranilate 1,2-dioxygenase electron transfer component of Acinetobacter baylyi (strain ATCC 33305 / BD413 / ADP1).